The following is a 325-amino-acid chain: MENNELLDITLRPKSLKEFIGQKKIKDNIEVFIKAALIRQEPLDHVLFCGPPGLGKTTLATVIANELGVNIKSTSGPVLERAGDVAAILTNLSDRDILFIDEIHRLPRMVEEILYPAMEDFTLDIIVGQGPSARSIKINLPRFTLIGATTRTGLITSPLRDRFGVVFRLEFYNSEELKEIVKRSARILGILIEENAATEIARRSRGTPRVANRLLKRIRDFAQVKDKDIIDLQIAQEALIAMDVDDYGLDDMDRKILLTIIEKFNGGPAGIESIAASLREDKDTIEDVYEPYLMQEGFIERTARGRVATRFAYEVLKRKIPERLF.

Residues 1-172 (MENNELLDIT…FGVVFRLEFY (172 aa)) form a large ATPase domain (RuvB-L) region. ATP contacts are provided by residues Leu11, Arg12, Gly53, Lys56, Thr57, Thr58, 119 to 121 (EDF), Arg162, Tyr172, and Arg209. Thr57 provides a ligand contact to Mg(2+). The tract at residues 173-243 (NSEELKEIVK…IAQEALIAMD (71 aa)) is small ATPAse domain (RuvB-S). The head domain (RuvB-H) stretch occupies residues 246–325 (DYGLDDMDRK…LKRKIPERLF (80 aa)). DNA is bound by residues Arg301 and Arg306.

Belongs to the RuvB family. Homohexamer. Forms an RuvA(8)-RuvB(12)-Holliday junction (HJ) complex. HJ DNA is sandwiched between 2 RuvA tetramers; dsDNA enters through RuvA and exits via RuvB. An RuvB hexamer assembles on each DNA strand where it exits the tetramer. Each RuvB hexamer is contacted by two RuvA subunits (via domain III) on 2 adjacent RuvB subunits; this complex drives branch migration. In the full resolvosome a probable DNA-RuvA(4)-RuvB(12)-RuvC(2) complex forms which resolves the HJ.

It is found in the cytoplasm. It carries out the reaction ATP + H2O = ADP + phosphate + H(+). In terms of biological role, the RuvA-RuvB-RuvC complex processes Holliday junction (HJ) DNA during genetic recombination and DNA repair, while the RuvA-RuvB complex plays an important role in the rescue of blocked DNA replication forks via replication fork reversal (RFR). RuvA specifically binds to HJ cruciform DNA, conferring on it an open structure. The RuvB hexamer acts as an ATP-dependent pump, pulling dsDNA into and through the RuvAB complex. RuvB forms 2 homohexamers on either side of HJ DNA bound by 1 or 2 RuvA tetramers; 4 subunits per hexamer contact DNA at a time. Coordinated motions by a converter formed by DNA-disengaged RuvB subunits stimulates ATP hydrolysis and nucleotide exchange. Immobilization of the converter enables RuvB to convert the ATP-contained energy into a lever motion, pulling 2 nucleotides of DNA out of the RuvA tetramer per ATP hydrolyzed, thus driving DNA branch migration. The RuvB motors rotate together with the DNA substrate, which together with the progressing nucleotide cycle form the mechanistic basis for DNA recombination by continuous HJ branch migration. Branch migration allows RuvC to scan DNA until it finds its consensus sequence, where it cleaves and resolves cruciform DNA. The chain is Holliday junction branch migration complex subunit RuvB from Thermodesulfovibrio yellowstonii (strain ATCC 51303 / DSM 11347 / YP87).